We begin with the raw amino-acid sequence, 155 residues long: MPKGSGKVIAQNKKAFHDYFIEETYEAGLVLQGTEIKSIRAGRVNLKDAFARVHNGEVWVHNMHISTYEQGNRFNHDPLRTRKLLLHKKEIEKLAGASKETGYALVPVRIYLKNGFAKMALGLAKGKKQYDKRHDLKEKEAKREIARAFRDRQKM.

It belongs to the SmpB family.

It localises to the cytoplasm. In terms of biological role, required for rescue of stalled ribosomes mediated by trans-translation. Binds to transfer-messenger RNA (tmRNA), required for stable association of tmRNA with ribosomes. tmRNA and SmpB together mimic tRNA shape, replacing the anticodon stem-loop with SmpB. tmRNA is encoded by the ssrA gene; the 2 termini fold to resemble tRNA(Ala) and it encodes a 'tag peptide', a short internal open reading frame. During trans-translation Ala-aminoacylated tmRNA acts like a tRNA, entering the A-site of stalled ribosomes, displacing the stalled mRNA. The ribosome then switches to translate the ORF on the tmRNA; the nascent peptide is terminated with the 'tag peptide' encoded by the tmRNA and targeted for degradation. The ribosome is freed to recommence translation, which seems to be the essential function of trans-translation. In Bacillus cereus (strain 03BB102), this protein is SsrA-binding protein.